A 246-amino-acid chain; its full sequence is Deoxycytidylate 5-hydroxymethyltransferase (246 aa).

Residue Cys-148 is part of the active site.

This sequence belongs to the thymidylate synthase family.

It carries out the reaction dCMP + (6R)-5,10-methylene-5,6,7,8-tetrahydrofolate + H2O = 5-hydroxymethyl-dCMP + (6S)-5,6,7,8-tetrahydrofolate. The polypeptide is Deoxycytidylate 5-hydroxymethyltransferase (42) (Enterobacteria phage T6 (Bacteriophage T6)).